A 371-amino-acid polypeptide reads, in one-letter code: Undecaprenyl-diphosphatase 1 (371 aa).

3 consecutive transmembrane segments (helical) span residues 53-73 (PYLA…IVAF), 100-120 (LAWL…LLEH), and 126-146 (LGRP…MLLG). Positions 152-226 (RSTTRGAPGP…PEAEDVTLPE (75 aa)) are disordered. Helical transmembrane passes span 291-311 (FAFL…LPDL), 322-342 (QTLF…RFLA), and 351-371 (TPFA…FGIF).

It belongs to the UppP family.

It localises to the cell membrane. It carries out the reaction di-trans,octa-cis-undecaprenyl diphosphate + H2O = di-trans,octa-cis-undecaprenyl phosphate + phosphate + H(+). Catalyzes the dephosphorylation of undecaprenyl diphosphate (UPP). Confers resistance to bacitracin. The protein is Undecaprenyl-diphosphatase 1 of Frankia casuarinae (strain DSM 45818 / CECT 9043 / HFP020203 / CcI3).